The primary structure comprises 1051 residues: MQETFKFLRCNSQGEAVEDKYSLETLKNHFVVRDEYNNLFRVFSSRDDFWEWEAAQPFEQKCFHEVVFGFLPQRLKFDIDFPVNKSYSNDNVDENVDDNVNDDDNVYDILDMIINVIMDVFYETYSLPYNINLTREQILLTDSIGLNKKRELKYSFHIILYTHSVLNNNEAKAFTSKVLENLPKHVYPFVDPQVNKSIQNFRIIGSHKKGSMRVKMFNEELADVFETSTTTKKSDTLIATPFETTCLPCIFTNVKETASSSCDTIQQSELEEVLKFAGTLCKNHCFLRVHKNLVLFKRTSPSYCEICKRMHDKDNTLILRVTGNKVYQHCRHDNKHSLLMGSLSGTNNFVETYVDQVMTKSIEVHESILFEELPDPQKHIYDESSMREYERVPTLVVKAQMKIGKTIQLRNYLQKYYGNNSISKQQTIRFVTFRQIFSKNIQSRLPNFTLYSEVTGDLDSYERVIIQVESLFRLTSTAEPVDLLILDEVESIFNQFNSGLHKYFAPSFAIFMWMLETANYVICLDANLGNRTYNILQRFRGDVPIFFHWNQYKRAQHDMYYFTSSRETWLNNLLKDLLEDKKIVIPTNSLMEARLLQSFIQKKFPEKKIGFYSSKSTAHERESHFNNVSYYWGLVDILIYTPTISAGVSYEDKRFDVLYGFFNNMSCDVETCCQMLGRVRELKSKCYKICLQGKQNYFPETIEDIEMFTLQKRDTLFQTISNHQLSFTYSKETGRPIYYKTPYYHLWLETMRIQHLSKNHFITRFINQIADTGAKVFILTGEKLETVKQYTSIKMEIKHQDYVNIASAETIDANKALLIKQNLKEGITVDQQDLFAYEKYKLLEFYAWHGHKITPKFVEQYNSFMTKQNYTGRVQISRGKTVYESLTMLQTQELNFHQWAMQHAEHHDLQYNYSFQSHMYAIMLLTKCGFKCVQDPNILTNEQLMAKLVDEFVQYDLSAVSFEFKLKKPNKTDPQTILKFINKVLGLRYGLKIHHNKGNYYIKNTKAGSLIPFVRQQIKQSPCVVSNLLPITETSSVKEETSPIKETLTET.

It belongs to the asfivirus F1055L family.

In terms of biological role, may be involved in DNA replication. This chain is Putative helicase/primase complex protein, found in Ornithodoros (relapsing fever ticks).